The following is a 418-amino-acid chain: uncharacterized protein (418 aa).

This sequence belongs to the poxviruses C4/C10 family.

This is an uncharacterized protein from Fowlpox virus (strain NVSL) (FPV).